A 152-amino-acid polypeptide reads, in one-letter code: Transcriptional regulator MraZ (152 aa).

SpoVT-AbrB domains are found at residues 5–52 and 81–124; these read ATLV…PLPE and ASEC…DEQT.

This sequence belongs to the MraZ family. Forms oligomers.

It is found in the cytoplasm. It localises to the nucleoid. Functionally, negatively regulates its own expression and that of the subsequent genes in the proximal part of the division and cell wall (dcw) gene cluster. Acts by binding directly to DNA. May also regulate the expression of genes outside the dcw cluster. The chain is Transcriptional regulator MraZ from Pectobacterium carotovorum subsp. carotovorum (strain PC1).